The primary structure comprises 137 residues: Small ribosomal subunit protein uS12 (137 aa).

Disordered regions lie at residues 1–21 (MPTI…KSDS) and 36–57 (TKLS…TPKK). At Asp102 the chain carries 3-methylthioaspartic acid.

It belongs to the universal ribosomal protein uS12 family. In terms of assembly, part of the 30S ribosomal subunit. Contacts proteins S8 and S17. May interact with IF1 in the 30S initiation complex.

Its function is as follows. With S4 and S5 plays an important role in translational accuracy. In terms of biological role, interacts with and stabilizes bases of the 16S rRNA that are involved in tRNA selection in the A site and with the mRNA backbone. Located at the interface of the 30S and 50S subunits, it traverses the body of the 30S subunit contacting proteins on the other side and probably holding the rRNA structure together. The combined cluster of proteins S8, S12 and S17 appears to hold together the shoulder and platform of the 30S subunit. The polypeptide is Small ribosomal subunit protein uS12 (Streptococcus agalactiae serotype Ia (strain ATCC 27591 / A909 / CDC SS700)).